The following is a 114-amino-acid chain: Apokedarcidin (114 aa).

Intrachain disulfides connect Cys-37–Cys-47 and Cys-88–Cys-95.

The protein belongs to the neocarzinostatin family.

Functionally, binds non-covalently to an enediyne chromophore which is the cytotoxic and mutagenic component of the antibiotic. The chromophore cleaves duplex DNA site-specifically in a single-stranded manner. The apoprotein cleaves proteins selectively, in particular highly basic histones, with H1 proteins being cleaved the more readily. This chain is Apokedarcidin, found in Actinomycete sp. (strain L585-6 / ATCC 53650).